A 311-amino-acid chain; its full sequence is Probable manganese-dependent inorganic pyrophosphatase (311 aa).

Residues histidine 9, aspartate 13, aspartate 15, aspartate 77, histidine 99, and aspartate 151 each coordinate Mn(2+).

This sequence belongs to the PPase class C family. It depends on Mn(2+) as a cofactor.

It localises to the cytoplasm. It catalyses the reaction diphosphate + H2O = 2 phosphate + H(+). This Streptococcus equi subsp. zooepidemicus (strain H70) protein is Probable manganese-dependent inorganic pyrophosphatase.